Consider the following 2617-residue polypeptide: Non-reducing polyketide synthase epaA (2617 aa).

The tract at residues 95–231 is N-terminal acylcarrier protein transacylase domain (SAT); the sequence is PNILLSPMVV…AARSISSLQQ (137 aa). Cys-132 (nucleophile; for transacylase activity) is an active-site residue. The Proton donor/acceptor; for transacylase activity role is filled by His-250. The region spanning 372 to 790 is the Ketosynthase family 3 (KS3) domain; the sequence is PNEIAVIGMS…GSNASMVVAQ (419 aa). Active-site for beta-ketoacyl synthase activity residues include Cys-539, His-674, and His-713. A malonyl-CoA:ACP transacylase (MAT) domain region spans residues 902-1193; sequence FGGQISNYVG…ITSMASRALG (292 aa). The segment at 1282–1413 is N-terminal hotdog fold; it reads PKTLWSLIEA…GKLAFLSGQD (132 aa). Residues 1282 to 1591 enclose the PKS/mFAS DH domain; the sequence is PKTLWSLIEA…YHKVAKASMS (310 aa). The segment at 1310–1589 is product template (PT) domain; the sequence is LVSGHVIANT…INYHKVAKAS (280 aa). His-1314 serves as the catalytic Proton acceptor; for dehydratase activity. The segment at 1443–1591 is C-terminal hotdog fold; the sequence is ADDIIQGRNI…YHKVAKASMS (149 aa). Asp-1499 acts as the Proton donor; for dehydratase activity in catalysis. The disordered stretch occupies residues 1600–1651; sequence TEAAPSSSTRAHPTSSSSPRLPGPSVPEDKSQNETQPAGTNAVAKKKSEKSA. A compositionally biased stretch (low complexity) spans 1602-1619; sequence AAPSSSTRAHPTSSSSPR. The Carrier domain occupies 1653–1727; that stretch reads QNVLEKTRAL…GLVEYVQSAV (75 aa). Ser-1687 carries the O-(pantetheine 4'-phosphoryl)serine modification. The disordered stretch occupies residues 1728–1799; the sequence is GVPTNGDEPD…PAMPPASSKT (72 aa). Over residues 1750–1766 the composition is skewed to low complexity; that stretch reads LAPSPSSSSSSTNLTED. Over residues 1769-1785 the composition is skewed to polar residues; the sequence is LDQAETTTNISSYPGQT. The methyltransferase domain stretch occupies residues 1970 to 2158; sequence DSLLNKLSYR…VGYGQVDWTD (189 aa). The tract at residues 2240 to 2485 is NADPH-binding (R) domain; sequence ITGATGSLGV…LCWTPVNDVA (246 aa).

Pantetheine 4'-phosphate serves as cofactor.

The protein operates within secondary metabolite biosynthesis. Functionally, non-reducing polyketide synthase; part of the gene cluster that mediates the biosynthesis of nigerpyrone and its derivatives carbonarone A and pestalamide A. The biosynthesis pathway begins with the polyketide assembly by epaA to form phenylacetyl triketide precursor from successive condensation of two malonyl-CoA, presumably with one phenylacetyl-CoA starter unit produced by the phenylacetyl-CoA ligase epaB. For the nigerpyrone biosynthesis, the reactive polyketide chain is released as an aldehyde through the R-domain. A nonenzymatic cyclization and dehydration may create nigerpyrone. For the biosynthesis of carbonarone A and pestalamide A, an extra methyl group is added through the C-methyltransferase domain. Several further steps involving the dehydrogenase orf1, the cytochrome P450 monooxygenase orf2 and the FAD-dependent monooxygenase orf3 are required to form a carbonarone A precursor which is converted to carbonarone A via cyclization. The O-acetyltransferase epaC could catalyze the transfer of 2-methylsuccinyl-CoA, a common intermediate in the ethylmalonyl-CoA pathway, to generate the final product pestalamide A. The sequence is that of Non-reducing polyketide synthase epaA from Aspergillus niger (strain ATCC MYA-4892 / CBS 513.88 / FGSC A1513).